Reading from the N-terminus, the 718-residue chain is Coiled-coil domain-containing protein 157 (718 aa).

Positions 300-603 (LRAQLEDAEG…LTKIREVAQQ (304 aa)) form a coiled coil. Basic and acidic residues predominate over residues 469–482 (RGSLDEAEAQRSEL). 2 disordered regions span residues 469–490 (RGSL…QSLQ) and 617–690 (PPYK…TQNP). Over residues 639-659 (TGRRQSPGSRTSSTGRTHPGG) the composition is skewed to low complexity.

This is Coiled-coil domain-containing protein 157 (Ccdc157) from Mus musculus (Mouse).